The primary structure comprises 297 residues: Protoheme IX farnesyltransferase (297 aa).

The next 9 helical transmembrane spans lie at 26-46 (VTQL…PGMV), 48-68 (YPVL…AFAV), 96-116 (LHII…LWNF), 120-140 (LTMW…TWLL), 147-167 (NIVI…AAVT), 174-194 (AWHL…ALAL), 218-238 (LLNI…PYIY), 245-265 (YLIS…ALFI), and 276-296 (FRFS…DHYF).

This sequence belongs to the UbiA prenyltransferase family. Protoheme IX farnesyltransferase subfamily.

It is found in the cell inner membrane. The enzyme catalyses heme b + (2E,6E)-farnesyl diphosphate + H2O = Fe(II)-heme o + diphosphate. The protein operates within porphyrin-containing compound metabolism; heme O biosynthesis; heme O from protoheme: step 1/1. Functionally, converts heme B (protoheme IX) to heme O by substitution of the vinyl group on carbon 2 of heme B porphyrin ring with a hydroxyethyl farnesyl side group. The chain is Protoheme IX farnesyltransferase from Polynucleobacter necessarius subsp. necessarius (strain STIR1).